The following is a 252-amino-acid chain: Small ribosomal subunit protein uS2A (252 aa).

Position 2 is an N-acetylserine (serine 2). Residues 209–252 form a disordered region; it reads EVEQQVAEEATTEEAGEEEAKEEVTEEQAEATEWAEENADNVEW. The segment covering 218–252 has biased composition (acidic residues); sequence ATTEEAGEEEAKEEVTEEQAEATEWAEENADNVEW.

It belongs to the universal ribosomal protein uS2 family. As to quaternary structure, component of the small ribosomal subunit. Mature ribosomes consist of a small (40S) and a large (60S) subunit. The 40S subunit contains about 33 different proteins and 1 molecule of RNA (18S). The 60S subunit contains about 49 different proteins and 3 molecules of RNA (25S, 5.8S and 5S). Interacts with RPS21.

It is found in the cytoplasm. Functionally, required for the assembly and/or stability of the 40S ribosomal subunit. Required for the processing of the 20S rRNA-precursor to mature 18S rRNA in a late step of the maturation of 40S ribosomal subunits. This Saccharomyces cerevisiae (strain RM11-1a) (Baker's yeast) protein is Small ribosomal subunit protein uS2A.